The sequence spans 220 residues: Polyadenylate-binding protein 2 (220 aa).

The tract at residues 1 to 24 is disordered; that stretch reads MEEEEHEVYGGEIPDVGEMDGDME. Residues 34–74 adopt a coiled-coil conformation; the sequence is AADDDAVKELDEMKKRLKEMEDEAAALREMQAKVEKEMGAQ. The necessary for homooligomerization stretch occupies residues 78-219; sequence SIAANQAGKE…FRRPMRYMPY (142 aa). The 77-residue stretch at 92 to 168 folds into the RRM domain; that stretch reads RSVFVGNVDY…RQLKVLQKRT (77 aa). Positions 165 to 172 match the Nuclear localization signal motif; that stretch reads QKRTNVPG.

As to quaternary structure, monomer and homooligomer. Binds RNA as a monomer and oligomerizes when bound to poly(A). Forms a complex with cleavage and polyadenylation specificity factor (CPSF) subunits PAPS2, FIPS5, PABN3 and PABN1. Interacts with CSP3.

It localises to the nucleus speckle. It is found in the cytoplasm. Its function is as follows. Involved in the 3'-end formation of mRNA precursors (pre-mRNA) by the addition of a poly(A) tail of 200-250 nt to the upstream cleavage product. Stimulates poly(A) polymerase (PAPOLA) conferring processivity on the poly(A) tail elongation reaction and also controls the poly(A) tail length. Increases the affinity of poly(A) polymerase for RNA. Binds to poly(A) and to poly(G) with high affinity. May protect the poly(A) tail from degradation. The chain is Polyadenylate-binding protein 2 from Arabidopsis thaliana (Mouse-ear cress).